Consider the following 293-residue polypeptide: Fructose-bisphosphate aldolase class 1 (293 aa).

The active-site Proton acceptor is Glu176. Lys211 (schiff-base intermediate with dihydroxyacetone-P) is an active-site residue.

The protein belongs to the class I fructose-bisphosphate aldolase family.

It catalyses the reaction beta-D-fructose 1,6-bisphosphate = D-glyceraldehyde 3-phosphate + dihydroxyacetone phosphate. The protein operates within carbohydrate degradation; glycolysis; D-glyceraldehyde 3-phosphate and glycerone phosphate from D-glucose: step 4/4. This Porphyromonas gingivalis (strain ATCC 33277 / DSM 20709 / CIP 103683 / JCM 12257 / NCTC 11834 / 2561) protein is Fructose-bisphosphate aldolase class 1.